The primary structure comprises 421 residues: Histidine--tRNA ligase (421 aa).

Belongs to the class-II aminoacyl-tRNA synthetase family. As to quaternary structure, homodimer.

The protein localises to the cytoplasm. It catalyses the reaction tRNA(His) + L-histidine + ATP = L-histidyl-tRNA(His) + AMP + diphosphate + H(+). The protein is Histidine--tRNA ligase of Alkaliphilus oremlandii (strain OhILAs) (Clostridium oremlandii (strain OhILAs)).